The following is a 243-amino-acid chain: Ribonuclease HII (243 aa).

Positions 23–217 (SVIVGVDEVG…LSSECEGAPP (195 aa)) constitute an RNase H type-2 domain. Aspartate 29, glutamate 30, and aspartate 122 together coordinate a divalent metal cation. Residues 223 to 243 (LSSTGIKTPVDGRGDAVATRD) form a disordered region. The span at 232-243 (VDGRGDAVATRD) shows a compositional bias: basic and acidic residues.

It belongs to the RNase HII family. Mn(2+) is required as a cofactor. It depends on Mg(2+) as a cofactor.

The protein resides in the cytoplasm. It catalyses the reaction Endonucleolytic cleavage to 5'-phosphomonoester.. Functionally, endonuclease that specifically degrades the RNA of RNA-DNA hybrids. In Anaplasma marginale (strain St. Maries), this protein is Ribonuclease HII.